The following is a 440-amino-acid chain: GTPase Obg (440 aa).

An Obg domain is found at 5–163 (STFVDQTKIE…RTLRLELKVL (159 aa)). An OBG-type G domain is found at 164–338 (ADVGLVGFPS…LMSRAADLVS (175 aa)). GTP-binding positions include 170-177 (GFPSVGKS), 195-199 (FTTLK), 217-220 (DLPG), 288-291 (SQMD), and 319-321 (SSV). Mg(2+) is bound by residues Ser177 and Thr197. The OCT domain maps to 362–440 (YHRPEKMEFT…IGDFSFEFVQ (79 aa)).

It belongs to the TRAFAC class OBG-HflX-like GTPase superfamily. OBG GTPase family. In terms of assembly, monomer. Mg(2+) serves as cofactor.

The protein localises to the cytoplasm. Functionally, an essential GTPase which binds GTP, GDP and possibly (p)ppGpp with moderate affinity, with high nucleotide exchange rates and a fairly low GTP hydrolysis rate. Plays a role in control of the cell cycle, stress response, ribosome biogenesis and in those bacteria that undergo differentiation, in morphogenesis control. This chain is GTPase Obg, found in Lactobacillus delbrueckii subsp. bulgaricus (strain ATCC BAA-365 / Lb-18).